Reading from the N-terminus, the 158-residue chain is UPF0262 protein RSKD131_1985 (158 aa).

Belongs to the UPF0262 family.

The chain is UPF0262 protein RSKD131_1985 from Cereibacter sphaeroides (strain KD131 / KCTC 12085) (Rhodobacter sphaeroides).